The primary structure comprises 163 residues: NADH-quinone oxidoreductase subunit I (163 aa).

4Fe-4S ferredoxin-type domains are found at residues 53–83 (LRRY…IEAG) and 94–123 (TLYE…ETRE). Residues cysteine 63, cysteine 66, cysteine 69, cysteine 73, cysteine 103, cysteine 106, cysteine 109, and cysteine 113 each coordinate [4Fe-4S] cluster.

This sequence belongs to the complex I 23 kDa subunit family. NDH-1 is composed of 14 different subunits. Subunits NuoA, H, J, K, L, M, N constitute the membrane sector of the complex. The cofactor is [4Fe-4S] cluster.

It localises to the cell inner membrane. The enzyme catalyses a quinone + NADH + 5 H(+)(in) = a quinol + NAD(+) + 4 H(+)(out). NDH-1 shuttles electrons from NADH, via FMN and iron-sulfur (Fe-S) centers, to quinones in the respiratory chain. The immediate electron acceptor for the enzyme in this species is believed to be ubiquinone. Couples the redox reaction to proton translocation (for every two electrons transferred, four hydrogen ions are translocated across the cytoplasmic membrane), and thus conserves the redox energy in a proton gradient. The sequence is that of NADH-quinone oxidoreductase subunit I from Alkalilimnicola ehrlichii (strain ATCC BAA-1101 / DSM 17681 / MLHE-1).